A 413-amino-acid polypeptide reads, in one-letter code: Eukaryotic initiation factor 4A-14 (413 aa).

The short motif at 40–68 (DSFDAMGLQENLLRGIYAYGFEKPSAIQQ) is the Q motif element. In terms of domain architecture, Helicase ATP-binding spans 71–241 (IVPFCKGLDV…RKFMSKPVRI (171 aa)). 84–91 (AQSGTGKT) contacts ATP. A DEAD box motif is present at residues 189-192 (DEAD). Residues 252-413 (GIKQFYVNVD…ELPANVADLL (162 aa)) form the Helicase C-terminal domain.

This sequence belongs to the DEAD box helicase family. eIF4A subfamily. As to quaternary structure, eIF4F is a multi-subunit complex, the composition of which varies with external and internal environmental conditions. It is composed of at least EIF4A, EIF4E and EIF4G.

The enzyme catalyses ATP + H2O = ADP + phosphate + H(+). Functionally, ATP-dependent RNA helicase which is a subunit of the eIF4F complex involved in cap recognition and is required for mRNA binding to ribosome. In the current model of translation initiation, eIF4A unwinds RNA secondary structures in the 5'-UTR of mRNAs which is necessary to allow efficient binding of the small ribosomal subunit, and subsequent scanning for the initiator codon. This is Eukaryotic initiation factor 4A-14 from Nicotiana tabacum (Common tobacco).